Here is a 323-residue protein sequence, read N- to C-terminus: o-succinylbenzoate synthase (323 aa).

The active-site Proton donor is K134. Residues D162, E191, and D214 each contribute to the Mg(2+) site. The Proton acceptor role is filled by K236.

The protein belongs to the mandelate racemase/muconate lactonizing enzyme family. MenC type 1 subfamily. A divalent metal cation is required as a cofactor.

It carries out the reaction (1R,6R)-6-hydroxy-2-succinyl-cyclohexa-2,4-diene-1-carboxylate = 2-succinylbenzoate + H2O. Its pathway is quinol/quinone metabolism; 1,4-dihydroxy-2-naphthoate biosynthesis; 1,4-dihydroxy-2-naphthoate from chorismate: step 4/7. The protein operates within quinol/quinone metabolism; menaquinone biosynthesis. Converts 2-succinyl-6-hydroxy-2,4-cyclohexadiene-1-carboxylate (SHCHC) to 2-succinylbenzoate (OSB). The protein is o-succinylbenzoate synthase of Yersinia pseudotuberculosis serotype O:1b (strain IP 31758).